A 380-amino-acid polypeptide reads, in one-letter code: DNA replication and repair protein RecF (380 aa).

30–37 contributes to the ATP binding site; sequence GENAQGKT.

It belongs to the RecF family.

Its subcellular location is the cytoplasm. The RecF protein is involved in DNA metabolism; it is required for DNA replication and normal SOS inducibility. RecF binds preferentially to single-stranded, linear DNA. It also seems to bind ATP. This chain is DNA replication and repair protein RecF, found in Synechococcus sp. (strain JA-3-3Ab) (Cyanobacteria bacterium Yellowstone A-Prime).